A 429-amino-acid polypeptide reads, in one-letter code: Trigger factor (429 aa).

Residues 162–247 (DDTVDLAFEG…INAIKKLRQP (86 aa)) enclose the PPIase FKBP-type domain.

The protein belongs to the FKBP-type PPIase family. Tig subfamily.

It localises to the cytoplasm. It carries out the reaction [protein]-peptidylproline (omega=180) = [protein]-peptidylproline (omega=0). In terms of biological role, involved in protein export. Acts as a chaperone by maintaining the newly synthesized protein in an open conformation. Functions as a peptidyl-prolyl cis-trans isomerase. This Fusobacterium nucleatum subsp. nucleatum (strain ATCC 25586 / DSM 15643 / BCRC 10681 / CIP 101130 / JCM 8532 / KCTC 2640 / LMG 13131 / VPI 4355) protein is Trigger factor.